Reading from the N-terminus, the 663-residue chain is Probable methylenetetrahydrofolate reductase (NADPH) (663 aa).

Glu76 (proton donor/acceptor) is an active-site residue. NAD(+)-binding positions include 76–81 (EFFPPR) and 107–108 (TW). Position 107 is a phosphothreonine (Thr107). FAD-binding positions include 107–108 (TW), His141, 171–173 (RGD), 187–188 (RA), Tyr210, 214–217 (HPQA), Asp223, and Lys230. Asp173 serves as a coordination point for substrate. Substrate is bound by residues Gln241, Tyr334, and Arg338. Ser408 carries the post-translational modification Phosphoserine. Position 465 is a phosphothreonine (Thr465). Residues 477 to 480 (QPET), 497 to 501 (TVNSQ), Thr578, and Thr591 each bind S-adenosyl-L-methionine.

Belongs to the methylenetetrahydrofolate reductase family. The cofactor is FAD.

The enzyme catalyses (6S)-5-methyl-5,6,7,8-tetrahydrofolate + NADP(+) = (6R)-5,10-methylene-5,6,7,8-tetrahydrofolate + NADPH + H(+). The protein operates within one-carbon metabolism; tetrahydrofolate interconversion. This Caenorhabditis elegans protein is Probable methylenetetrahydrofolate reductase (NADPH).